The following is a 135-amino-acid chain: Cytochrome b-c1 complex subunit 6, mitochondrial (135 aa).

A disordered region spans residues 1–70 (MSFFRDLLES…ETADPLDTLR (70 aa)). The span at 19–64 (EPVEDVEVEQPEDAPEEEVSEETVEEEEDDDEDDDEDDEEEEETAD) shows a compositional bias: acidic residues.

Belongs to the UQCRH/QCR6 family. In terms of assembly, component of the ubiquinol-cytochrome c oxidoreductase (cytochrome b-c1 complex, complex III, CIII), a multisubunit enzyme composed of 10 subunits. The complex is composed of 3 respiratory subunits cytochrome b (COB), cytochrome c1 (CYT1) and Rieske protein (RIP1), 2 core protein subunits COR1 and QCR2, and 5 low-molecular weight protein subunits QCR6, QCR7, QCR8, QCR9 and QCR10. The complex exists as an obligatory dimer and forms supercomplexes (SCs) in the inner mitochondrial membrane with a monomer or a dimer of cytochrome c oxidase (complex IV, CIV), resulting in 2 different assemblies (supercomplexes III(2)IV and III(2)IV(2)).

Its subcellular location is the mitochondrion inner membrane. Component of the ubiquinol-cytochrome c oxidoreductase, a multisubunit transmembrane complex that is part of the mitochondrial electron transport chain which drives oxidative phosphorylation. The complex plays an important role in the uptake of multiple carbon sources present in different host niches. The sequence is that of Cytochrome b-c1 complex subunit 6, mitochondrial from Candida albicans (strain SC5314 / ATCC MYA-2876) (Yeast).